Consider the following 282-residue polypeptide: Chlorite dismutase (282 aa).

A signal peptide spans 1 to 31 (MTNLSIHNFKLSLVAAVIGSAMVMTSSPVAA). Glu-104 contacts Ca(2+). His-204 provides a ligand contact to heme. Arg-217 (proton acceptor) is an active-site residue. Ca(2+) contacts are provided by Asp-226 and Thr-265.

Belongs to the chlorite dismutase family. In terms of assembly, homopentamer. The cofactor is heme b.

The protein localises to the periplasm. It catalyses the reaction chloride + O2 = chlorite. In terms of biological role, catalyzes the heme-dependent decomposition of chlorite to O(2) and chloride with high efficiency and specificity. Used to detoxify chlorite, a by-product of the reduction of perchlorate, a primarily anthropogenic pollutant, in perchlorate-respiring bacteria. In Dechloromonas aromatica (strain RCB), this protein is Chlorite dismutase.